The primary structure comprises 210 residues: Proteasome subunit beta (210 aa).

A propeptide spans 1–7 (MEVLKTG) (removed in mature form; by autocatalysis). The active-site Nucleophile is the Thr8.

Belongs to the peptidase T1B family. In terms of assembly, the 20S proteasome core is composed of 14 alpha and 14 beta subunits that assemble into four stacked heptameric rings, resulting in a barrel-shaped structure. The two inner rings, each composed of seven catalytic beta subunits, are sandwiched by two outer rings, each composed of seven alpha subunits. The catalytic chamber with the active sites is on the inside of the barrel. Has a gated structure, the ends of the cylinder being occluded by the N-termini of the alpha-subunits. Is capped at one or both ends by the proteasome regulatory ATPase, PAN.

It localises to the cytoplasm. The catalysed reaction is Cleavage of peptide bonds with very broad specificity.. The formation of the proteasomal ATPase PAN-20S proteasome complex, via the docking of the C-termini of PAN into the intersubunit pockets in the alpha-rings, triggers opening of the gate for substrate entry. Interconversion between the open-gate and close-gate conformations leads to a dynamic regulation of the 20S proteasome proteolysis activity. In terms of biological role, component of the proteasome core, a large protease complex with broad specificity involved in protein degradation. The chain is Proteasome subunit beta from Picrophilus torridus (strain ATCC 700027 / DSM 9790 / JCM 10055 / NBRC 100828 / KAW 2/3).